The chain runs to 134 residues: uncharacterized protein (134 aa).

Its subcellular location is the cell membrane. Functionally, may have a role in the regulation of NDH-1 biosynthesis. This is an uncharacterized protein from Paracoccus denitrificans.